Consider the following 104-residue polypeptide: Gallinacin-11 (104 aa).

The N-terminal stretch at M1 to G22 is a signal peptide. Intrachain disulfides connect C30/C60, C37/C53, and C43/C61.

This sequence belongs to the beta-defensin family. Detected in outer membrane of the vitelline layer of the egg (at protein level). Expressed in the liver, gall bladder, kidney, testis, ovary and male and female reproductive tracts. Expressed in the ovarian stroma, but not in the ovarian follicles. No expression is detected in bone marrow.

Its subcellular location is the secreted. It localises to the cytoplasmic granule. Its function is as follows. Has bactericidal activity. The protein is Gallinacin-11 (GAL11) of Gallus gallus (Chicken).